The chain runs to 159 residues: RNA pyrophosphohydrolase (159 aa).

The Nudix hydrolase domain maps to 6 to 149 (GFRPNVGIIL…KREVYRRALK (144 aa)). The Nudix box signature appears at 38–59 (GGINDRESPEEALYRELNEEVG).

The protein belongs to the Nudix hydrolase family. RppH subfamily. A divalent metal cation serves as cofactor.

Accelerates the degradation of transcripts by removing pyrophosphate from the 5'-end of triphosphorylated RNA, leading to a more labile monophosphorylated state that can stimulate subsequent ribonuclease cleavage. This is RNA pyrophosphohydrolase from Ectopseudomonas mendocina (strain ymp) (Pseudomonas mendocina).